A 930-amino-acid polypeptide reads, in one-letter code: MSLISAAADVNDASSTTSAGSVRSSAVYRKDGKPLSQEALYRAQQKYGVFQSPARQTGSGLKDSKMASDVAANLANNNRTTIEAYKRVLDSNASRAATAVSSRSRSSSVTSNATVVTTSSKSTNAAVKALSSKPVEQPVAPKKSNMNMSKILVGAEAAAEKRIGIRMKPEKIVYVPSKESGKAAERSMSLTPEIMDKLKTKGDYEAEAEVEADPKKYASKAAFAVRDFDPNEATEKELLEREKKKQAYFGMLTSPQVLSLARANAQVKLDQIDKAAPGSLYKNEEFNKLAVALAQKNSTKRSEHHGKINMGGGLWLTQADVQNIAQGLITPVLDEVDSRALQQRAIDEDIKQRKIDFKEQNAAWIELQRNKLSNDKMYSRETRMRHKRETEGLHARTERKFQDLCASKDSEVAEMEKALQNAKDSYAALQKQMEEDLEKERLRVEAEVAALKKEQEEDLKAARVEQEQELKPYVDDVKAAEAEHERLTAERDSLNKEIEELRASIESHKVRIEELDNEISDSAAKHEEEEGKREELTKHKEEFDQEVSEKFTVIAQAAKEKAQKSSEEARLKQLEVDAMINERQSELNSTELELKKEKLSLLEAMRNVTELKGEDKLDENRVKALIGMTSEEFIAENNKSVNVSDDKFEPFNEHTASTKSIKHEEGVLGEGGAKTNSDELPVKDSAEKSSEHLNSTAEKSIEPAKASSPYPAKPSMVDAVLPKDFKPEVKPKAKPAHKTPQQGAAAGGEPASAKSGVKRSPSLKQKFMGIIKGDTKSQSKPAAAATPVHPPATVKKAAPKKAAASSEADTPAKVSPAKDTAKTEIQKIAQGGPAPAPEPEHKTAPAVDNATTKSVSTLQKPTNSGIDKSEIHKIAQGGPAPTSGHSNHTRTSVYENGDNSDDEDELPDSSEAGENGIGADKKGSLFKEVF.

Disordered stretches follow at residues 1-34, 98-143, 516-544, and 637-930; these read MSLISAAADVNDASSTTSAGSVRSSAVYRKDGKP, TAVS…APKK, DNEISDSAAKHEEEEGKREELTKHKEEFD, and NNKS…KEVF. 2 stretches are compositionally biased toward low complexity: residues 13–27 and 98–129; these read ASSTTSAGSVRSSAV and TAVSSRSRSSSVTSNATVVTTSSKSTNAAVKA. Composition is skewed to basic and acidic residues over residues 523 to 542 and 676 to 691; these read AAKHEEEEGKREELTKHKEE and NSDELPVKDSAEKSSE. The segment covering 703-715 has biased composition (low complexity); sequence PAKASSPYPAKPS. Over residues 721-731 the composition is skewed to basic and acidic residues; sequence LPKDFKPEVKP. Composition is skewed to low complexity over residues 740 to 755 and 781 to 804; these read PQQGAAAGGEPASAKS and PAAAATPVHPPATVKKAAPKKAAA. 2 stretches are compositionally biased toward polar residues: residues 849 to 866 and 883 to 894; these read NATTKSVSTLQKPTNSGI and SGHSNHTRTSVY. Acidic residues predominate over residues 898–908; that stretch reads DNSDDEDELPD. The segment covering 919-930 has biased composition (basic and acidic residues); sequence ADKKGSLFKEVF.

The protein belongs to the EIS1 family.

The protein resides in the cytoplasmic granule. Its subcellular location is the cell membrane. Its function is as follows. Required for normal formation of eisosomes, large cytoplasmic protein assemblies that localize to specialized domains on plasma membrane and mark the site of endocytosis. This Lachancea thermotolerans (strain ATCC 56472 / CBS 6340 / NRRL Y-8284) (Yeast) protein is Eisosome protein 1 (EIS1).